The sequence spans 407 residues: Serine/threonine transporter SstT (407 aa).

The next 9 membrane-spanning stretches (helical) occupy residues 14–34 (GSLV…ATVS), 48–68 (FVGA…AASI), 82–102 (IVIL…LMSF), 141–161 (AVLT…GLAL), 192–212 (IGIF…AIAG), 216–236 (LLLV…PAIV), 290–310 (IPLG…ILTL), 316–336 (MGIQ…GVSA), and 363–383 (VAMQ…SAET).

It belongs to the dicarboxylate/amino acid:cation symporter (DAACS) (TC 2.A.23) family.

The protein localises to the cell inner membrane. The enzyme catalyses L-serine(in) + Na(+)(in) = L-serine(out) + Na(+)(out). It carries out the reaction L-threonine(in) + Na(+)(in) = L-threonine(out) + Na(+)(out). Its function is as follows. Involved in the import of serine and threonine into the cell, with the concomitant import of sodium (symport system). In Shewanella halifaxensis (strain HAW-EB4), this protein is Serine/threonine transporter SstT.